We begin with the raw amino-acid sequence, 475 residues long: NADH-quinone oxidoreductase subunit N 1 (475 aa).

14 helical membrane-spanning segments follow: residues 8-28, 36-56, 67-87, 100-120, 122-142, 157-177, 199-219, 244-264, 268-288, 295-315, 322-342, 366-386, 403-423, and 443-463; these read VMPL…EAAT, LFAI…PSEP, GGFF…ITLI, GEYY…SAAA, LTIL…LAGI, FLLG…IYGA, FLSG…AVPF, AAAL…LETF, PTAI…AALI, MFAY…ATGT, VLYY…IIIL, AFLM…GGFI, LAVA…RVVI, and ATIA…SLLI.

It belongs to the complex I subunit 2 family. NDH-1 is composed of 14 different subunits. Subunits NuoA, H, J, K, L, M, N constitute the membrane sector of the complex.

The protein resides in the cell inner membrane. The catalysed reaction is a quinone + NADH + 5 H(+)(in) = a quinol + NAD(+) + 4 H(+)(out). NDH-1 shuttles electrons from NADH, via FMN and iron-sulfur (Fe-S) centers, to quinones in the respiratory chain. The immediate electron acceptor for the enzyme in this species is believed to be a menaquinone. Couples the redox reaction to proton translocation (for every two electrons transferred, four hydrogen ions are translocated across the cytoplasmic membrane), and thus conserves the redox energy in a proton gradient. The protein is NADH-quinone oxidoreductase subunit N 1 of Chloroherpeton thalassium (strain ATCC 35110 / GB-78).